We begin with the raw amino-acid sequence, 752 residues long: Multifunctional tryptophan biosynthesis protein (752 aa).

Residues 3–202 (FTLLIDNYDS…IQMKGGKWGG (200 aa)) form the Glutamine amidotransferase type-1 domain. Residue 58–60 (GPG) participates in L-glutamine binding. C86 acts as the Nucleophile; for GATase activity in catalysis. 136–137 (SL) is a binding site for L-glutamine. Active-site for GATase activity residues include H176 and E178. An indole-3-glycerol phosphate synthase region spans residues 231 to 495 (ILNRIHAQRL…DTKAFLRSLI (265 aa)). Residues 509 to 752 (LVKICGIRST…VEAFVKAVRG (244 aa)) are N-(5'-phosphoribosyl)anthranilate isomerase.

It catalyses the reaction N-(5-phospho-beta-D-ribosyl)anthranilate = 1-(2-carboxyphenylamino)-1-deoxy-D-ribulose 5-phosphate. The catalysed reaction is 1-(2-carboxyphenylamino)-1-deoxy-D-ribulose 5-phosphate + H(+) = (1S,2R)-1-C-(indol-3-yl)glycerol 3-phosphate + CO2 + H2O. The enzyme catalyses chorismate + L-glutamine = anthranilate + pyruvate + L-glutamate + H(+). Its pathway is amino-acid biosynthesis; L-tryptophan biosynthesis; L-tryptophan from chorismate: step 1/5. It participates in amino-acid biosynthesis; L-tryptophan biosynthesis; L-tryptophan from chorismate: step 3/5. The protein operates within amino-acid biosynthesis; L-tryptophan biosynthesis; L-tryptophan from chorismate: step 4/5. Functionally, trifunctional enzyme bearing the Gln amidotransferase (GATase) domain of anthranilate synthase, indole-glycerolphosphate synthase, and phosphoribosylanthranilate isomerase activities. This Cryptococcus neoformans var. neoformans serotype D (strain JEC21 / ATCC MYA-565) (Filobasidiella neoformans) protein is Multifunctional tryptophan biosynthesis protein (TRP1).